Here is a 298-residue protein sequence, read N- to C-terminus: Lipoyl synthase (298 aa).

Residues Cys40, Cys45, Cys51, Cys67, Cys71, Cys74, and Ser280 each coordinate [4Fe-4S] cluster. In terms of domain architecture, Radical SAM core spans 53–269; that stretch reads AVRRTATFMI…KEIALSKGFS (217 aa).

The protein belongs to the radical SAM superfamily. Lipoyl synthase family. [4Fe-4S] cluster serves as cofactor.

Its subcellular location is the cytoplasm. The enzyme catalyses [[Fe-S] cluster scaffold protein carrying a second [4Fe-4S](2+) cluster] + N(6)-octanoyl-L-lysyl-[protein] + 2 oxidized [2Fe-2S]-[ferredoxin] + 2 S-adenosyl-L-methionine + 4 H(+) = [[Fe-S] cluster scaffold protein] + N(6)-[(R)-dihydrolipoyl]-L-lysyl-[protein] + 4 Fe(3+) + 2 hydrogen sulfide + 2 5'-deoxyadenosine + 2 L-methionine + 2 reduced [2Fe-2S]-[ferredoxin]. It functions in the pathway protein modification; protein lipoylation via endogenous pathway; protein N(6)-(lipoyl)lysine from octanoyl-[acyl-carrier-protein]. Its function is as follows. Catalyzes the radical-mediated insertion of two sulfur atoms into the C-6 and C-8 positions of the octanoyl moiety bound to the lipoyl domains of lipoate-dependent enzymes, thereby converting the octanoylated domains into lipoylated derivatives. The chain is Lipoyl synthase from Geobacillus kaustophilus (strain HTA426).